The following is a 542-amino-acid chain: CTP synthase (542 aa).

The amidoligase domain stretch occupies residues 1-265 (MPRYIFITGG…DTEILRCFGI (265 aa)). A CTP-binding site is contributed by Ser-13. Ser-13 is a UTP binding site. Residue 14-19 (SLGKGL) participates in ATP binding. Residue Tyr-54 coordinates L-glutamine. Asp-71 contacts ATP. 2 residues coordinate Mg(2+): Asp-71 and Glu-139. Residues 146 to 148 (DIE), 186 to 191 (KTKPTQ), and Lys-222 contribute to the CTP site. Residues 186-191 (KTKPTQ) and Lys-222 contribute to the UTP site. Position 238-240 (238-240 (RDA)) interacts with ATP. The Glutamine amidotransferase type-1 domain occupies 298–541 (YVGLLDAYKS…IAAALHQSRM (244 aa)). Residue Gly-353 coordinates L-glutamine. The Nucleophile; for glutamine hydrolysis role is filled by Cys-380. L-glutamine contacts are provided by residues 381 to 384 (YGMQ), Glu-404, and Arg-469. Active-site residues include His-514 and Glu-516.

This sequence belongs to the CTP synthase family. In terms of assembly, homotetramer.

The catalysed reaction is UTP + L-glutamine + ATP + H2O = CTP + L-glutamate + ADP + phosphate + 2 H(+). The enzyme catalyses L-glutamine + H2O = L-glutamate + NH4(+). It carries out the reaction UTP + NH4(+) + ATP = CTP + ADP + phosphate + 2 H(+). It participates in pyrimidine metabolism; CTP biosynthesis via de novo pathway; CTP from UDP: step 2/2. With respect to regulation, allosterically activated by GTP, when glutamine is the substrate; GTP has no effect on the reaction when ammonia is the substrate. The allosteric effector GTP functions by stabilizing the protein conformation that binds the tetrahedral intermediate(s) formed during glutamine hydrolysis. Inhibited by the product CTP, via allosteric rather than competitive inhibition. In terms of biological role, catalyzes the ATP-dependent amination of UTP to CTP with either L-glutamine or ammonia as the source of nitrogen. Regulates intracellular CTP levels through interactions with the four ribonucleotide triphosphates. The polypeptide is CTP synthase (Maricaulis maris (strain MCS10) (Caulobacter maris)).